We begin with the raw amino-acid sequence, 238 residues long: Ras association domain-containing protein 3 (238 aa).

Residue serine 2 is modified to N-acetylserine. The disordered stretch occupies residues 26–48 (RAPQGKPRSGQQDVEKEKETHSY). Positions 38-48 (DVEKEKETHSY) are enriched in basic and acidic residues. The Ras-associating domain maps to 79-186 (YTGFIKVQME…TLSFVLREHE (108 aa)). The SARAH domain maps to 187–234 (IGEWEAFSLPELQNFLRILDKEEDEQLQNLKRRYTAYRQKLEEALREV).

As to expression, widely expressed.

The protein resides in the cytoplasm. It localises to the cytoskeleton. The polypeptide is Ras association domain-containing protein 3 (RASSF3) (Homo sapiens (Human)).